The following is a 372-amino-acid chain: NAD(P)H-quinone oxidoreductase subunit 1 (372 aa).

8 helical membrane-spanning segments follow: residues 29 to 49 (WIPL…LVVV), 97 to 117 (WLFT…YLIV), 130 to 150 (VGIF…LMSG), 176 to 196 (LAFS…IDIV), 204 to 224 (ILGW…IAAL), 254 to 274 (FGLF…VFAI), 308 to 328 (SLGI…AVLL), and 347 to 367 (FLLP…LAFP).

It belongs to the complex I subunit 1 family. In terms of assembly, NDH-1 is composed of at least 11 different subunits.

The protein localises to the cellular thylakoid membrane. It carries out the reaction a plastoquinone + NADH + (n+1) H(+)(in) = a plastoquinol + NAD(+) + n H(+)(out). The enzyme catalyses a plastoquinone + NADPH + (n+1) H(+)(in) = a plastoquinol + NADP(+) + n H(+)(out). NDH-1 shuttles electrons from an unknown electron donor, via FMN and iron-sulfur (Fe-S) centers, to quinones in the respiratory and/or the photosynthetic chain. The immediate electron acceptor for the enzyme in this species is believed to be plastoquinone. Couples the redox reaction to proton translocation, and thus conserves the redox energy in a proton gradient. The chain is NAD(P)H-quinone oxidoreductase subunit 1 from Rippkaea orientalis (strain PCC 8801 / RF-1) (Cyanothece sp. (strain PCC 8801)).